A 296-amino-acid polypeptide reads, in one-letter code: GTPase Era (296 aa).

Residues 3–170 form the Era-type G domain; that stretch reads KSGFVTIVGR…KELMFKYIPE (168 aa). The tract at residues 11-18 is G1; sequence GRPNVGKS. 11–18 contacts GTP; the sequence is GRPNVGKS. The tract at residues 37–41 is G2; the sequence is QTTRN. The tract at residues 58–61 is G3; that stretch reads DTPG. Residues 58-62 and 120-123 contribute to the GTP site; these read DTPGI and NKID. The segment at 120-123 is G4; that stretch reads NKID. The interval 149–151 is G5; the sequence is ISA. The KH type-2 domain maps to 201–278; the sequence is LSEEVPHGIA…YIRLWVKVKE (78 aa).

Belongs to the TRAFAC class TrmE-Era-EngA-EngB-Septin-like GTPase superfamily. Era GTPase family. As to quaternary structure, monomer.

The protein localises to the cytoplasm. It localises to the cell membrane. Its function is as follows. An essential GTPase that binds both GDP and GTP, with rapid nucleotide exchange. Plays a role in 16S rRNA processing and 30S ribosomal subunit biogenesis and possibly also in cell cycle regulation and energy metabolism. The protein is GTPase Era of Clostridium botulinum (strain Loch Maree / Type A3).